The sequence spans 284 residues: uncharacterized protein (284 aa).

Gln-54 contacts FMN. Catalysis depends on Cys-83, which acts as the Proton donor. Residues Lys-125, His-153, 183 to 185, and 207 to 208 contribute to the FMN site; these read NGG and AN.

This sequence belongs to the Dus family. FMN serves as cofactor.

Its function is as follows. Catalyzes the synthesis of dihydrouridine, a modified base found in the D-loop of most tRNAs. This is an uncharacterized protein from Caenorhabditis elegans.